A 74-amino-acid polypeptide reads, in one-letter code: Putative antitoxin VapB48 (74 aa).

Possibly the antitoxin component of a type II toxin-antitoxin (TA) system. Its cognate toxin is VapC48 (Potential). The chain is Putative antitoxin VapB48 (vapB48) from Mycobacterium tuberculosis (strain CDC 1551 / Oshkosh).